The primary structure comprises 433 residues: Glutamate-1-semialdehyde 2,1-aminomutase (433 aa).

An N6-(pyridoxal phosphate)lysine modification is found at K269.

This sequence belongs to the class-III pyridoxal-phosphate-dependent aminotransferase family. HemL subfamily. In terms of assembly, homodimer. Pyridoxal 5'-phosphate is required as a cofactor.

The protein resides in the cytoplasm. It carries out the reaction (S)-4-amino-5-oxopentanoate = 5-aminolevulinate. The protein operates within porphyrin-containing compound metabolism; protoporphyrin-IX biosynthesis; 5-aminolevulinate from L-glutamyl-tRNA(Glu): step 2/2. This Francisella philomiragia subsp. philomiragia (strain ATCC 25017 / CCUG 19701 / FSC 153 / O#319-036) protein is Glutamate-1-semialdehyde 2,1-aminomutase.